Reading from the N-terminus, the 179-residue chain is Large ribosomal subunit protein uL5 (179 aa).

This sequence belongs to the universal ribosomal protein uL5 family. As to quaternary structure, part of the 50S ribosomal subunit; part of the 5S rRNA/L5/L18/L25 subcomplex. Contacts the 5S rRNA and the P site tRNA. Forms a bridge to the 30S subunit in the 70S ribosome.

In terms of biological role, this is one of the proteins that bind and probably mediate the attachment of the 5S RNA into the large ribosomal subunit, where it forms part of the central protuberance. In the 70S ribosome it contacts protein S13 of the 30S subunit (bridge B1b), connecting the 2 subunits; this bridge is implicated in subunit movement. Contacts the P site tRNA; the 5S rRNA and some of its associated proteins might help stabilize positioning of ribosome-bound tRNAs. The polypeptide is Large ribosomal subunit protein uL5 (Geotalea daltonii (strain DSM 22248 / JCM 15807 / FRC-32) (Geobacter daltonii)).